A 1238-amino-acid chain; its full sequence is Receptor-type tyrosine-protein phosphatase eta (1238 aa).

The N-terminal stretch at 1 to 28 is a signal peptide; that stretch reads MKPAARETRTPPRSPGLRWALLPLLLLL. The Extracellular segment spans residues 29–876; sequence RQGQVLCAGA…LPQDPGVICG (848 aa). The Fibronectin type-III 1 domain maps to 39–122; sequence APNPIFDIEA…LNKTITTEPW (84 aa). N-linked (GlcNAc...) asparagine glycosylation is found at N62, N78, N85, N90, N110, N114, N145, N164, N173, N182, N198, N207, N244, N253, N267, N278, N313, N317, N333, N366, N379, N398, N403, N437, N452, N488, N506, N538, N572, N576, N662, N668, N685, N691, N725, N811, and N838. The 97-residue stretch at 170-266 folds into the Fibronectin type-III 2 domain; it reads PGTNNSFAFP…GQPRNKVFKT (97 aa). 6 Fibronectin type-III domains span residues 270 to 358, 359 to 443, 444 to 527, 528 to 621, 622 to 718, and 717 to 803; these read QVSD…SPDQ, VSDF…TDPS, AVTD…TQYT, RPSS…TEPE, PVTS…TDPP, and PPTP…SEVL. A helical membrane pass occupies residues 877 to 897; that stretch reads AVFGCIFGALAITAVGGFIFW. Residues 898–1238 lie on the Cytoplasmic side of the membrane; sequence RKKRTDAKNN…MFGKTNGYIA (341 aa). S910 carries the post-translational modification Phosphoserine. Positions 942–1199 constitute a Tyrosine-protein phosphatase domain; sequence FAEEYEDLKL…VFLNQCVLDI (258 aa). Substrate-binding positions include D1106, 1140–1146, and Q1184; that span reads CSAGVGR. The Phosphocysteine intermediate role is filled by C1140.

Belongs to the protein-tyrosine phosphatase family. Receptor class 3 subfamily. As to quaternary structure, monomer. Interacts with CTNNB1 (phosphorylated) and JUP (phosphorylated). Interacts with FLT3 (phosphorylated). Interacts with GAB1 and GRB2. In terms of tissue distribution, expressed at high levels in brain, kidney, spleen and intestine, and at lower levels in liver, lung, thymus and heart. Expressed at a high level in the myeloid cell line FDC-P2, and at a lower level in the pre-B lymphoid cell line WEHI-231 and the T hybridoma cell line HB21.7.31. Not expressed in the fibroblast cell line NIH3T3 or the erythroid cell line F5-5. Expressed in macrophages.

Its subcellular location is the cell membrane. It localises to the cell projection. The protein resides in the ruffle membrane. The protein localises to the cell junction. The catalysed reaction is O-phospho-L-tyrosyl-[protein] + H2O = L-tyrosyl-[protein] + phosphate. Its function is as follows. Tyrosine phosphatase which dephosphorylates or contributes to the dephosphorylation of CTNND1, FLT3, PDGFRB, MET, KDR, LYN, SRC, MAPK1, MAPK3, EGFR, TJP1, OCLN, PIK3R1 and PIK3R2. Plays a role in cell adhesion, migration, proliferation and differentiation. Has a role in megakaryocytes and platelet formation. Involved in vascular development. May be involved in the mechanism of contact inhibition of cell growth. Regulator of macrophage adhesion and spreading. Positively affects cell-matrix adhesion. Positive regulator of platelet activation and thrombosis. Negative regulator of cell proliferation. Negative regulator of PDGF-stimulated cell migration; through dephosphorylation of PDGFR. Positive regulator of endothelial cell survival, as well as of VEGF-induced SRC and AKT activation; through KDR dephosphorylation. Negative regulator of EGFR signaling pathway; through EGFR dephosphorylation. Enhances the barrier function of epithelial junctions during reassembly. Negatively regulates T-cell receptor (TCR) signaling. Upon T-cell TCR activation, it is up-regulated and excluded from the immunological synapses, while upon T-cell-antigen presenting cells (APC) disengagement, it is no longer excluded and can dephosphorylate PLCG1 and LAT to down-regulate prolongation of signaling. This chain is Receptor-type tyrosine-protein phosphatase eta (Ptprj), found in Mus musculus (Mouse).